Reading from the N-terminus, the 505-residue chain is 2,3-bisphosphoglycerate-independent phosphoglycerate mutase (505 aa).

Asp-12 and Ser-62 together coordinate Mn(2+). Ser-62 acts as the Phosphoserine intermediate in catalysis. Substrate contacts are provided by residues His-123, 153 to 154, Arg-185, Arg-191, 257 to 260, and Lys-330; these read RD and RPDR. 5 residues coordinate Mn(2+): Asp-397, His-401, Asp-438, His-439, and His-456.

This sequence belongs to the BPG-independent phosphoglycerate mutase family. As to quaternary structure, monomer. The cofactor is Mn(2+).

It catalyses the reaction (2R)-2-phosphoglycerate = (2R)-3-phosphoglycerate. Its pathway is carbohydrate degradation; glycolysis; pyruvate from D-glyceraldehyde 3-phosphate: step 3/5. In terms of biological role, catalyzes the interconversion of 2-phosphoglycerate and 3-phosphoglycerate. The polypeptide is 2,3-bisphosphoglycerate-independent phosphoglycerate mutase (Staphylococcus epidermidis (strain ATCC 35984 / DSM 28319 / BCRC 17069 / CCUG 31568 / BM 3577 / RP62A)).